Consider the following 156-residue polypeptide: SsrA-binding protein (156 aa).

It belongs to the SmpB family.

The protein localises to the cytoplasm. In terms of biological role, required for rescue of stalled ribosomes mediated by trans-translation. Binds to transfer-messenger RNA (tmRNA), required for stable association of tmRNA with ribosomes. tmRNA and SmpB together mimic tRNA shape, replacing the anticodon stem-loop with SmpB. tmRNA is encoded by the ssrA gene; the 2 termini fold to resemble tRNA(Ala) and it encodes a 'tag peptide', a short internal open reading frame. During trans-translation Ala-aminoacylated tmRNA acts like a tRNA, entering the A-site of stalled ribosomes, displacing the stalled mRNA. The ribosome then switches to translate the ORF on the tmRNA; the nascent peptide is terminated with the 'tag peptide' encoded by the tmRNA and targeted for degradation. The ribosome is freed to recommence translation, which seems to be the essential function of trans-translation. This chain is SsrA-binding protein, found in Desulfitobacterium hafniense (strain DSM 10664 / DCB-2).